A 643-amino-acid polypeptide reads, in one-letter code: Conglutin alpha 2 (643 aa).

Residues 1 to 22 form the signal peptide; it reads MAKPCLFSFSLCLLLLSSLCLA. 2 disulfide bridges follow: Cys31/Cys64 and Cys107/Cys464. Residues 36 to 261 enclose the Cupin type-1 1 domain; the sequence is LNALEPDNRV…AFNVDEEIIN (226 aa). 3 disordered regions span residues 110-142, 190-243, and 285-458; these read TYEEAQQSQSSQDPRRRSSRSQSQEQEQQDSHQ, PRRF…VLSG, and PKSQ…SRNG. Residues 207–218 show a composition bias toward low complexity; sequence QEQQGQQREQQQ. Composition is skewed to basic and acidic residues over residues 228–237 and 298–313; these read HQQEQEEEGK and PRQRGQPERREERREE. Acidic residues predominate over residues 314–323; that stretch reads EKEEEEEEDE. Basic and acidic residues-rich tracts occupy residues 324-333 and 357-369; these read PRSRERYERQ and QEGRGQQREWERT. Residues 422–433 are compositionally biased toward basic residues; the sequence is RGRHGGRGRRSG. Residues 470-616 form the Cupin type-1 2 domain; the sequence is ENIAKPSRAD…AFGLRLNQVS (147 aa). Residues 623–632 are compositionally biased toward polar residues; sequence NQGPLVSPQS. The segment at 623–643 is disordered; that stretch reads NQGPLVSPQSESEDHTLPKVA. Over residues 634–643 the composition is skewed to basic and acidic residues; that stretch reads SEDHTLPKVA.

This sequence belongs to the 11S seed storage protein (globulins) family. As to quaternary structure, hexamer; each subunit is composed of an acidic and a basic chain derived from a single precursor and linked by a disulfide bond. Component of globulins complexes which accumulate in seeds.

Sulfur-rich seed storage protein. This protein found in the seeds of many leguminous and non-leguminous plants is the source of sulfur-containing amino acids in seed meals. The polypeptide is Conglutin alpha 2 (Lupinus angustifolius (Narrow-leaved blue lupine)).